A 340-amino-acid chain; its full sequence is UPF0324 membrane protein OB3406 (340 aa).

9 helical membrane passes run 12–31 (SFYT…GVLC), 36–58 (LDIM…TIGL), 94–116 (GLHA…YSLA), 126–148 (SILT…APLV), 155–177 (TAVS…TMMY), 215–237 (IAIV…IGIY), 257–276 (IPWF…IGFL), 281–303 (VNLL…GLNV), and 315–337 (VFFA…IYVM).

It belongs to the UPF0324 family.

It is found in the cell membrane. This chain is UPF0324 membrane protein OB3406, found in Oceanobacillus iheyensis (strain DSM 14371 / CIP 107618 / JCM 11309 / KCTC 3954 / HTE831).